The chain runs to 62 residues: Sperm protamine P1 (62 aa).

A disordered region spans residues 1 to 46 (MARCRRHSRSRSRSRNQCQRRRRRHYNRRRTYRRSRRHSRRRRVRR).

This sequence belongs to the protamine P1 family. Testis.

It is found in the nucleus. The protein localises to the chromosome. In terms of biological role, protamines substitute for histones in the chromatin of sperm during the haploid phase of spermatogenesis. They compact sperm DNA into a highly condensed, stable and inactive complex. The chain is Sperm protamine P1 (PRM1) from Planigale gilesi (Flat-skulled marsupial mouse).